The sequence spans 410 residues: Elongation factor Tu, chloroplastic (410 aa).

The 206-residue stretch at 10–215 (KPHVNIGTIG…IVDEYIPTPQ (206 aa)) folds into the tr-type G domain. Residues 19 to 26 (GHVDHGKT) are G1. Residue 19 to 26 (GHVDHGKT) participates in GTP binding. T26 is a Mg(2+) binding site. Residues 61–65 (GITIN) are G2. The interval 82 to 85 (DCPG) is G3. GTP contacts are provided by residues 82–86 (DCPGH) and 137–140 (NKAD). The interval 137–140 (NKAD) is G4. The tract at residues 175–177 (SAL) is G5.

It belongs to the TRAFAC class translation factor GTPase superfamily. Classic translation factor GTPase family. EF-Tu/EF-1A subfamily.

The protein localises to the plastid. Its subcellular location is the chloroplast. It carries out the reaction GTP + H2O = GDP + phosphate + H(+). Its function is as follows. GTP hydrolase that promotes the GTP-dependent binding of aminoacyl-tRNA to the A-site of ribosomes during protein biosynthesis. This chain is Elongation factor Tu, chloroplastic (tufA), found in Cyanidioschyzon merolae (strain NIES-3377 / 10D) (Unicellular red alga).